The following is a 352-amino-acid chain: Invasion chromosome antigen T (352 aa).

The protein belongs to the IcaT/YfdF family.

The protein localises to the secreted. Functionally, may contribute to pathogenesis, although some of its characteristics suggest it is a fossil gene. The sequence is that of Invasion chromosome antigen T from Shigella flexneri serotype 5a (strain M90T).